Reading from the N-terminus, the 619-residue chain is MINHNKTPNILAKVFKRTCGLVSTGAALAILSQAASAACTYTIDSEWSTGFTANITLKNDTGAAINNWNVNWQYSSNRMTSGWNANFSGTNPYNATNMSWNGSIAPGQSISFGLQGEKNGSTAERPTVTGAACNSATTSSVASSSSTPTTSSSSASSVASALLLQEAQAGFCRVDGTIDNNHTGFTGSGFANTNNAQGAAVVWAIDATSSGRRTLTIRYANGGTANRNGSLVINGGSNGNYTVSLPTTGAWTTWQTATIDVDLVQGNNIVQLSATTAEGLPNIDSLSVVGGTVRAGNCGSVSSSSSVQSSSSSSSTPSQTCELKAPLRWTSTGPLISPKNPGWISIKDPSIVKYNDTYHVYATYYDTAYRSMYTSFTDWNTAQQAPHISMNGSRVGNTVAPQVFYFRPHNKWYLITQWAGAYATTDDIRNPNWSAKQKLLQGEPNGALDFWVICNDTHCYLYFSRDDGVLYVSKTTLANFPNFSGYSIVMEDHRGNGNSYLFEAANVYKLDGQNRYLLMVEAYISGPRFFRSWTATSLDGPWTPLADTEANPFAGNNNVEWSTGKWADGISHGELIRSGHDEKMTVDPCNLEFLYQGASGPGSTYNTIPYKLGLLRLKK.

Residues 1 to 37 (MINHNKTPNILAKVFKRTCGLVSTGAALAILSQAASA) form the signal peptide. The CBM2 domain maps to 38 to 136 (ACTYTIDSEW…TVTGAACNSA (99 aa)). Cys39 and Cys133 are joined by a disulfide. Positions 163-289 (LLQEAQAGFC…LPNIDSLSVV (127 aa)) constitute a CBM6 domain. Positions 300–319 (SVSSSSSVQSSSSSSSTPSQ) are disordered.

It belongs to the glycosyl hydrolase 62 family.

It is found in the secreted. It carries out the reaction Hydrolysis of terminal non-reducing alpha-L-arabinofuranoside residues in alpha-L-arabinosides.. Its pathway is glycan metabolism; hemicellulose degradation. In terms of biological role, xylanase C contributes to hydrolyze hemicellulose, the major component of plant cell-walls. In Cellvibrio japonicus (strain Ueda107) (Pseudomonas fluorescens subsp. cellulosa), this protein is Alpha-L-arabinofuranosidase C (xynC).